The chain runs to 98 residues: Large ribosomal subunit protein uL23 (98 aa).

This sequence belongs to the universal ribosomal protein uL23 family. Part of the 50S ribosomal subunit. Contacts protein L29, and trigger factor when it is bound to the ribosome.

One of the early assembly proteins it binds 23S rRNA. One of the proteins that surrounds the polypeptide exit tunnel on the outside of the ribosome. Forms the main docking site for trigger factor binding to the ribosome. This Rickettsia prowazekii (strain Madrid E) protein is Large ribosomal subunit protein uL23.